The following is a 551-amino-acid chain: Solute carrier family 22 member 4 (551 aa).

Residues 1–20 lie on the Cytoplasmic side of the membrane; that stretch reads MRDYDEAIAFLGEWGPFQRL. Residues 21 to 41 traverse the membrane as a helical segment; that stretch reads IFFLLSASIIPNGFNGMSVVF. Topologically, residues 42 to 141 are extracellular; the sequence is LAGTPEHRCR…WNLVCEDNWK (100 aa). N-linked (GlcNAc...) asparagine glycans are attached at residues Asn57, Asn64, and Asn91. Residues 142–162 traverse the membrane as a helical segment; it reads VPLTTSLFFVGVLLGSFVSGQ. At 163 to 171 the chain is on the cytoplasmic side; sequence LSDRFGRKN. Residues 172–192 form a helical membrane-spanning segment; sequence VLFATMAVQTGFSFLQIFSIS. The Extracellular segment spans residues 193-197; sequence WEMFT. The chain crosses the membrane as a helical span at residues 198–218; sequence VLFLIVGMGQISNYVVAFILG. 218–225 provides a ligand contact to ATP; it reads GTEILGKS. Over 219 to 232 the chain is Cytoplasmic; that stretch reads TEILGKSVRIIFST. A helical transmembrane segment spans residues 233–253; it reads LGVCTFFAVGYMLLPLFAYFI. At 254–257 the chain is on the extracellular side; that stretch reads RDWR. The helical transmembrane segment at 258–278 threads the bilayer; that stretch reads MLLLALTVPGVLCVPLWWFIP. The Cytoplasmic portion of the chain corresponds to 279–337; the sequence is ESPRWLISQRRFREAEDIIQKAAKMNNIAVPAVIFDSVEELNPLKQQKAFILDLFRTWN. The chain crosses the membrane as a helical span at residues 338–358; it reads IAIMTIMSLLLWMLTSVGYFA. The Extracellular portion of the chain corresponds to 359-371; sequence LSLDTPNLHGDAY. The chain crosses the membrane as a helical span at residues 372–392; that stretch reads LNCFLSALIEIPAYITAWLLL. The Cytoplasmic segment spans residues 393–399; it reads RTLPRRY. Residues 400–420 form a helical membrane-spanning segment; that stretch reads IIAAVLFWGGGVLLFIQLVPV. At 421–426 the chain is on the extracellular side; sequence DYYFLS. A helical membrane pass occupies residues 427-447; it reads IGLVMLGKFGITSAFSMLYVF. The Cytoplasmic portion of the chain corresponds to 448–460; it reads TAELYPTMVRNMA. A helical membrane pass occupies residues 461–481; sequence VGVTSMASRVGSIIAPYFVYL. Residues 482-486 lie on the Extracellular side of the membrane; that stretch reads GAYNR. Residues 487-507 traverse the membrane as a helical segment; it reads MLPYIVMGSLTVLIGILTLFF. At 508-551 the chain is on the cytoplasmic side; the sequence is PESLGMTLPETLEQMQKVKWFRSGKKTRDSMETEENPKVLITAF.

It belongs to the major facilitator (TC 2.A.1) superfamily. Organic cation transporter (TC 2.A.1.19) family. In terms of assembly, interacts with PDZK1.

It localises to the apical cell membrane. Its subcellular location is the basal cell membrane. The protein localises to the mitochondrion membrane. The catalysed reaction is ergothioneine(out) + Na(+)(out) = ergothioneine(in) + Na(+)(in). The enzyme catalyses acetylcholine(in) = acetylcholine(out). It carries out the reaction (R)-carnitine(out) + Na(+)(out) = (R)-carnitine(in) + Na(+)(in). It catalyses the reaction glycine betaine(out) + Na(+)(out) = glycine betaine(in) + Na(+)(in). With respect to regulation, allosterically activated by intracellular ATP. Functionally, transporter that mediates the transport of endogenous and microbial zwitterions and organic cations. Functions as a Na(+)-dependent and pH-dependent high affinity microbial symporter of potent food-derived antioxidant ergothioeine. Transports one sodium ion with one ergothioeine molecule. Involved in the absorption of ergothioneine from the luminal/apical side of the small intestine and renal tubular cells, and into non-parenchymal liver cells, thereby contributing to maintain steady-state ergothioneine level in the body. Also mediates the bidirectional transport of acetycholine, although the exact transport mechanism has not been fully identified yet. Most likely exports anti-inflammatory acetylcholine in non-neuronal tissues, thereby contributing to the non-neuronal cholinergic system. Displays a general physiological role linked to better survival by controlling inflammation and oxidative stress, which may be related to ergothioneine and acetycholine transports. May also function as a low-affinity Na(+)-dependent transporter of L-carnitine through the mitochondrial membrane, thereby maintaining intracellular carnitine homeostasis. May contribute to regulate the transport of cationic compounds in testis across the blood-testis-barrier. This is Solute carrier family 22 member 4 (SLC22A4) from Papio anubis (Olive baboon).